Consider the following 2185-residue polypeptide: Genome polyprotein (2185 aa).

Glycine 2 carries the N-myristoyl glycine; by host lipid modification. At 2–1495 the chain is on the cytoplasmic side; it reads GAQVSTQKTG…HVSRAFICLQ (1494 aa). Positions 568-584 are amphipathic alpha-helix; it reads FFQGPVEDAITAAIGRV. Active-site for protease 2A activity residues include histidine 872 and aspartate 890. Residues cysteine 907 and cysteine 909 each coordinate Zn(2+). Cysteine 961 functions as the For protease 2A activity in the catalytic mechanism. The Zn(2+) site is built by cysteine 967 and histidine 969. Positions 1101-1173 are membrane-binding; it reads NNGWLKKFTE…EQSAPSQSDQ (73 aa). The oligomerization stretch occupies residues 1101 to 1239; sequence NNGWLKKFTE…SPGAGKSVAT (139 aa). An RNA-binding region spans residues 1122–1126; the sequence is AIKIQ. The SF3 helicase domain maps to 1205–1361; that stretch reads EKKMSNYIQF…SMYSQNGKIN (157 aa). Zn(2+) contacts are provided by cysteine 1369, cysteine 1381, and cysteine 1386. A C4-type; degenerate zinc finger spans residues 1369–1386; it reads CDEECCPVNFKKCCPLVC. The tract at residues 1413–1420 is RNA-binding; it reads EYNHRHSV. Residues 1424-1429 form an oligomerization region; that stretch reads LEALFQ. Residues 1496–1511 lie within the membrane without spanning it; sequence AITTFVSVAGIIYIIY. The Cytoplasmic portion of the chain corresponds to 1512–2185; the sequence is KLFAGFQGAY…TIRRKWLDSF (674 aa). The residue at position 1521 (tyrosine 1521) is an O-(5'-phospho-RNA)-tyrosine. Residues 1541 to 1719 form the Peptidase C3 domain; that stretch reads GPAFEFAVAM…FSAALLKHYF (179 aa). Active-site for protease 3C activity residues include histidine 1580, glutamate 1611, and cysteine 1687. A RdRp catalytic domain is found at 1950 to 2066; sequence GHLIAFDYSG…SYPWPIDASL (117 aa). Positions 1956 and 2052 each coordinate Mg(2+).

The protein belongs to the picornaviruses polyprotein family. As to quaternary structure, interacts with capsid protein VP1 and capsid protein VP3 to form heterotrimeric protomers. In terms of assembly, interacts with capsid protein VP0, and capsid protein VP3 to form heterotrimeric protomers. Five protomers subsequently associate to form pentamers which serve as building blocks for the capsid. Interacts with capsid protein VP2, capsid protein VP3 and capsid protein VP4 following cleavage of capsid protein VP0. Interacts with host CD55. Interacts with host CXADR. Interacts with capsid protein VP1 and capsid protein VP3 in the mature capsid. As to quaternary structure, interacts with capsid protein VP0 and capsid protein VP1 to form heterotrimeric protomers. Five protomers subsequently associate to form pentamers which serve as building blocks for the capsid. Interacts with capsid protein VP4 in the mature capsid. Interacts with protein 2C; this interaction may be important for virion morphogenesis. In terms of assembly, interacts with capsid protein VP1 and capsid protein VP3. Homodimer. As to quaternary structure, homohexamer; forms a hexameric ring structure with 6-fold symmetry characteristic of AAA+ ATPases. Interacts (via N-terminus) with host RTN3 (via reticulon domain); this interaction is important for viral replication. Interacts with capsid protein VP3; this interaction may be important for virion morphogenesis. In terms of assembly, interacts with protein 3CD. Homodimer. Interacts with host GBF1. Interacts (via GOLD domain) with host ACBD3 (via GOLD domain); this interaction allows the formation of a viral protein 3A/ACBD3 heterotetramer with a 2:2 stoichiometry, which will stimulate the recruitment of host PI4KB in order to synthesize PI4P at the viral RNA replication sites. As to quaternary structure, interacts with RNA-directed RNA polymerase. In terms of assembly, interacts with host TICAM1 (via C-terminus). Interacts with protein 3AB and with RNA-directed RNA polymerase. As to quaternary structure, interacts with Viral protein genome-linked and with protein 3CD. Mg(2+) is required as a cofactor. In terms of processing, specific enzymatic cleavages in vivo by the viral proteases yield processing intermediates and the mature proteins. Post-translationally, myristoylation is required for the formation of pentamers during virus assembly. Further assembly of 12 pentamers and a molecule of genomic RNA generates the provirion. During virion maturation, immature virions are rendered infectious following cleavage of VP0 into VP4 and VP2. This maturation seems to be an autocatalytic event triggered by the presence of RNA in the capsid and it is followed by a conformational change infectious virion. In terms of processing, myristoylation is required during RNA encapsidation and formation of the mature virus particle. Post-translationally, VPg is uridylylated by the polymerase into VPg-pUpU. This acts as a nucleotide-peptide primer for the genomic RNA replication.

The protein resides in the virion. It localises to the host cytoplasm. The protein localises to the host cytoplasmic vesicle membrane. It is found in the host nucleus. It carries out the reaction a ribonucleoside 5'-triphosphate + H2O = a ribonucleoside 5'-diphosphate + phosphate + H(+). It catalyses the reaction Selective cleavage of Tyr-|-Gly bond in the picornavirus polyprotein.. The catalysed reaction is RNA(n) + a ribonucleoside 5'-triphosphate = RNA(n+1) + diphosphate. The enzyme catalyses Selective cleavage of Gln-|-Gly bond in the poliovirus polyprotein. In other picornavirus reactions Glu may be substituted for Gln, and Ser or Thr for Gly.. Its activity is regulated as follows. Replication or transcription is subject to high level of random mutations by the nucleotide analog ribavirin. Functionally, forms an icosahedral capsid of pseudo T=3 symmetry with capsid proteins VP2 and VP3. The capsid is 300 Angstroms in diameter, composed of 60 copies of each capsid protein and enclosing the viral positive strand RNA genome. Capsid protein VP1 mainly forms the vertices of the capsid. Capsid protein VP1 interacts with host cell receptors CD55 and CXADR to provide virion attachment to target host cells. This attachment induces virion internalization. Tyrosine kinases are probably involved in the entry process. After binding to its receptor, the capsid undergoes conformational changes. Capsid protein VP1 N-terminus (that contains an amphipathic alpha-helix) and capsid protein VP4 are externalized. Together, they shape a pore in the host membrane through which viral genome is translocated to host cell cytoplasm. In terms of biological role, forms an icosahedral capsid of pseudo T=3 symmetry with capsid proteins VP2 and VP3. The capsid is 300 Angstroms in diameter, composed of 60 copies of each capsid protein and enclosing the viral positive strand RNA genome. Its function is as follows. Lies on the inner surface of the capsid shell. After binding to the host receptor, the capsid undergoes conformational changes. Capsid protein VP4 is released, Capsid protein VP1 N-terminus is externalized, and together, they shape a pore in the host membrane through which the viral genome is translocated into the host cell cytoplasm. Component of immature procapsids, which is cleaved into capsid proteins VP4 and VP2 after maturation. Allows the capsid to remain inactive before the maturation step. Functionally, cysteine protease that cleaves viral polyprotein and specific host proteins. It is responsible for the autocatalytic cleavage between the P1 and P2 regions, which is the first cleavage occurring in the polyprotein. Also cleaves the host translation initiation factor EIF4G1, in order to shut down the capped cellular mRNA translation. Inhibits the host nucleus-cytoplasm protein and RNA trafficking by cleaving host members of the nuclear pores. Counteracts stress granule formation probably by antagonizing its assembly or promoting its dissassembly. Cleaves and inhibits host IFIH1/MDA5, thereby inhibiting the type-I IFN production and the establishment of the antiviral state. Cleaves and inhibits host MAVS, thereby inhibiting the type-I IFN production and the establishment of the antiviral state. In terms of biological role, plays an essential role in the virus replication cycle by acting as a viroporin. Creates a pore in the host endoplasmic reticulum and as a consequence releases Ca2+ in the cytoplasm of infected cell. In turn, high levels of cytoplasmic calcium may trigger membrane trafficking and transport of viral ER-associated proteins to viroplasms, sites of viral genome replication. Its function is as follows. Induces and associates with structural rearrangements of intracellular membranes. Displays RNA-binding, nucleotide binding and NTPase activities. May play a role in virion morphogenesis and viral RNA encapsidation by interacting with the capsid protein VP3. Localizes the viral replication complex to the surface of membranous vesicles. Together with protein 3CD binds the Cis-Active RNA Element (CRE) which is involved in RNA synthesis initiation. Acts as a cofactor to stimulate the activity of 3D polymerase, maybe through a nucleid acid chaperone activity. Functionally, localizes the viral replication complex to the surface of membranous vesicles. It inhibits host cell endoplasmic reticulum-to-Golgi apparatus transport and causes the disassembly of the Golgi complex, possibly through GBF1 interaction. This would result in depletion of MHC, trail receptors and IFN receptors at the host cell surface. Plays an essential role in viral RNA replication by recruiting ACBD3 and PI4KB at the viral replication sites, thereby allowing the formation of the rearranged membranous structures where viral replication takes place. In terms of biological role, acts as a primer for viral RNA replication and remains covalently bound to viral genomic RNA. VPg is uridylylated prior to priming replication into VPg-pUpU. The oriI viral genomic sequence may act as a template for this. The VPg-pUpU is then used as primer on the genomic RNA poly(A) by the RNA-dependent RNA polymerase to replicate the viral genome. During genome replication, the VPg-RNA linkage is removed by the host TDP2, thereby accelerating replication. During the late stage of the replication cycle, host TDP2 is excluded from sites of viral RNA synthesis and encapsidation, allowing for the generation of progeny virions. Its function is as follows. Involved in the viral replication complex and viral polypeptide maturation. It exhibits protease activity with a specificity and catalytic efficiency that is different from protease 3C. Protein 3CD lacks polymerase activity. Protein 3CD binds to the 5'UTR of the viral genome. Major viral protease that mediates proteolytic processing of the polyprotein. Cleaves host EIF5B, contributing to host translation shutoff. Also cleaves host PABPC1, contributing to host translation shutoff. Cleaves and inhibits host RIGI, thereby inhibiting the type-I IFN production and the establishment of the antiviral state. Cleaves and inhibits host MAVS, thereby inhibiting the type-I IFN production and the establishment of the antiviral state. Cleaves and inhibits host TICAM1/TRIF, thereby inhibiting the type-I IFN production. Cleaves host NLRP1, triggers host N-glycine-mediated degradation of the autoinhibitory NLRP1 N-terminal fragment. Functionally, replicates the viral genomic RNA on the surface of intracellular membranes. May form linear arrays of subunits that propagate along a strong head-to-tail interaction called interface-I. Covalently attaches UMP to a tyrosine of VPg, which is used to prime RNA synthesis. The positive stranded RNA genome is first replicated at virus induced membranous vesicles, creating a dsRNA genomic replication form. This dsRNA is then used as template to synthesize positive stranded RNA genomes. ss(+)RNA genomes are either translated, replicated or encapsidated. This chain is Genome polyprotein, found in Homo sapiens (Human).